The chain runs to 343 residues: Methylthioribose-1-phosphate isomerase (343 aa).

Substrate contacts are provided by residues 44-46, arginine 85, and glutamine 192; that span reads RGA. Aspartate 233 serves as the catalytic Proton donor. 243-244 lines the substrate pocket; that stretch reads NK.

Belongs to the eIF-2B alpha/beta/delta subunits family. MtnA subfamily.

The enzyme catalyses 5-(methylsulfanyl)-alpha-D-ribose 1-phosphate = 5-(methylsulfanyl)-D-ribulose 1-phosphate. The protein operates within amino-acid biosynthesis; L-methionine biosynthesis via salvage pathway; L-methionine from S-methyl-5-thio-alpha-D-ribose 1-phosphate: step 1/6. Functionally, catalyzes the interconversion of methylthioribose-1-phosphate (MTR-1-P) into methylthioribulose-1-phosphate (MTRu-1-P). This is Methylthioribose-1-phosphate isomerase from Carboxydothermus hydrogenoformans (strain ATCC BAA-161 / DSM 6008 / Z-2901).